The following is a 377-amino-acid chain: Succinyl-diaminopimelate desuccinylase (377 aa).

A Zn(2+)-binding site is contributed by His68. Residue Asp70 is part of the active site. Asp101 provides a ligand contact to Zn(2+). The active-site Proton acceptor is Glu135. 3 residues coordinate Zn(2+): Glu136, Glu164, and His350.

Belongs to the peptidase M20A family. DapE subfamily. As to quaternary structure, homodimer. The cofactor is Zn(2+). Co(2+) serves as cofactor.

It carries out the reaction N-succinyl-(2S,6S)-2,6-diaminopimelate + H2O = (2S,6S)-2,6-diaminopimelate + succinate. It participates in amino-acid biosynthesis; L-lysine biosynthesis via DAP pathway; LL-2,6-diaminopimelate from (S)-tetrahydrodipicolinate (succinylase route): step 3/3. Catalyzes the hydrolysis of N-succinyl-L,L-diaminopimelic acid (SDAP), forming succinate and LL-2,6-diaminopimelate (DAP), an intermediate involved in the bacterial biosynthesis of lysine and meso-diaminopimelic acid, an essential component of bacterial cell walls. This is Succinyl-diaminopimelate desuccinylase from Aliivibrio fischeri (strain MJ11) (Vibrio fischeri).